A 93-amino-acid chain; its full sequence is Small ribosomal subunit protein uS19 (93 aa).

It belongs to the universal ribosomal protein uS19 family.

Protein S19 forms a complex with S13 that binds strongly to the 16S ribosomal RNA. In Latilactobacillus sakei subsp. sakei (strain 23K) (Lactobacillus sakei subsp. sakei), this protein is Small ribosomal subunit protein uS19.